The chain runs to 688 residues: Translation initiation factor IF-2 (688 aa).

The segment at 53–101 is disordered; the sequence is GAEKPSVADEFEVEEKVVRSKKNSNKNKKKGKANEDKRQDNFAGRQQTP. The span at 71 to 83 shows a compositional bias: basic residues; that stretch reads RSKKNSNKNKKKG. Positions 190–359 constitute a tr-type G domain; the sequence is ERPAVVTIMG…LLVSEVEEYK (170 aa). The G1 stretch occupies residues 199-206; the sequence is GHVDHGKT. 199-206 serves as a coordination point for GTP; that stretch reads GHVDHGKT. Residues 224–228 are G2; the sequence is GITQH. Residues 245 to 248 form a G3 region; it reads DTPG. Residues 245–249 and 299–302 each bind GTP; these read DTPGH and NKMD. Positions 299–302 are G4; the sequence is NKMD. The interval 335 to 337 is G5; that stretch reads SAI.

This sequence belongs to the TRAFAC class translation factor GTPase superfamily. Classic translation factor GTPase family. IF-2 subfamily.

Its subcellular location is the cytoplasm. In terms of biological role, one of the essential components for the initiation of protein synthesis. Protects formylmethionyl-tRNA from spontaneous hydrolysis and promotes its binding to the 30S ribosomal subunits. Also involved in the hydrolysis of GTP during the formation of the 70S ribosomal complex. The protein is Translation initiation factor IF-2 of Bacillus mycoides (strain KBAB4) (Bacillus weihenstephanensis).